Consider the following 610-residue polypeptide: Glutamine--fructose-6-phosphate aminotransferase [isomerizing] (610 aa).

Cysteine 2 (nucleophile; for GATase activity) is an active-site residue. One can recognise a Glutamine amidotransferase type-2 domain in the interval 2–218 (CGIVGAVAQR…EGDIAEITRR (217 aa)). SIS domains lie at 278 to 426 (IVDS…VKGH) and 459 to 600 (LAED…VDQP). Lysine 605 functions as the For Fru-6P isomerization activity in the catalytic mechanism.

In terms of assembly, homodimer.

The protein resides in the cytoplasm. It catalyses the reaction D-fructose 6-phosphate + L-glutamine = D-glucosamine 6-phosphate + L-glutamate. Its function is as follows. Catalyzes the first step in hexosamine metabolism, converting fructose-6P into glucosamine-6P using glutamine as a nitrogen source. The chain is Glutamine--fructose-6-phosphate aminotransferase [isomerizing] from Haemophilus influenzae (strain ATCC 51907 / DSM 11121 / KW20 / Rd).